Consider the following 234-residue polypeptide: MAVVSLSEMMEAGAHFGHQTRRWNPKMSKYIYCARNGVHIIDLVKTALCMNNAYKWTRNAAKSGKRFLFVGTKKQASDVVAQEAVRCGAAYVNQRWLGGMLTNWTTMKARIERLKDLERMESSGAIAMRPKKEAAVLRRELERLQKYLGGLKGMRRLPDVVVLVDQRRESNAVLEARKLDISLVSMLDTNCDPDLCEVPIPCNDDAVRSVQLILGRLADAINEGRKGSNDQRKN.

This sequence belongs to the universal ribosomal protein uS2 family.

In Prochlorococcus marinus subsp. pastoris (strain CCMP1986 / NIES-2087 / MED4), this protein is Small ribosomal subunit protein uS2.